The primary structure comprises 440 residues: Glutamyl-tRNA(Gln) amidotransferase subunit D (440 aa).

One can recognise an Asparaginase/glutaminase domain in the interval 94-424; the sequence is PSVTILGTGG…KEVRRMMLTN (331 aa). Active-site residues include threonine 104, threonine 180, aspartate 181, and lysine 258.

This sequence belongs to the asparaginase 1 family. GatD subfamily. In terms of assembly, heterodimer of GatD and GatE.

It catalyses the reaction L-glutamyl-tRNA(Gln) + L-glutamine + ATP + H2O = L-glutaminyl-tRNA(Gln) + L-glutamate + ADP + phosphate + H(+). Functionally, allows the formation of correctly charged Gln-tRNA(Gln) through the transamidation of misacylated Glu-tRNA(Gln) in organisms which lack glutaminyl-tRNA synthetase. The reaction takes place in the presence of glutamine and ATP through an activated gamma-phospho-Glu-tRNA(Gln). The GatDE system is specific for glutamate and does not act on aspartate. In Thermococcus kodakarensis (strain ATCC BAA-918 / JCM 12380 / KOD1) (Pyrococcus kodakaraensis (strain KOD1)), this protein is Glutamyl-tRNA(Gln) amidotransferase subunit D.